Reading from the N-terminus, the 768-residue chain is MEEELKCPVCGSLFREPIILPCSHNVCLPCARTIAVQTPDGEQHLPPPLLLSRGAAAAATPPDQDAAAGATSGGAGANTAGGLGGGATGGGDHADKLSLYSETDSGYGSYTPSLKSPNGVRVLPMVPAPPGSSAAAARGAACSSLCSSSSSITCPQCHRSASLDHRGLRGFQRNRLLEGIVQRYQQGRGVVPGAAAAPAVAICQLCDRTPPEPAATLCEQCDVLYCATCQLKCHPSRGPFAKHRLVQPPPPPTPPEATPAVTGTSTASSAGGCRSPGGAGASAPRKFPTCPEHEMENYSMYCVSCRSPVCYMCLEEGRHSKHEVKPLGATWKQHKAQLSQALNGVSDKAKEAKEFLVQLKNILQQIQENGLDYEACLVAQCDALVDALTRQKAKLLTKVTKEREHKLKMVWDQINHCTLKLRQSTGLMEYCLEVIKEDDPSGFLQISDALIKRVQTSQEQWVKGALEPKVSAEFDLTLDSEPLLQAIHQLDFVQMKLPPVPLLQLEKCCTRNNSVTLAWRTPPFTHSPAEGYILELDDGDGGQFREVYVGKETLCTIDGLHFNSTYNARVKAFNSSGVGPYSKTVVLQTSDVAWFTFDPNSGHRDIILSNDNQTATCSSYDDRVVLGTAAFSKGVHYWELHVDRYDNHPDPAFGVARASVVKDMMLGKDDKAWAMYVDNNRSWFMHCNSHTNRTEGGVCKGATVGVLLDLNKHTLTFFINGQQQGPTAFSHVDGVFMPALSLNRNVQVTLHTGLEVPTNLGRPKLSGN.

An RING-type; degenerate zinc finger spans residues 7-42 (CPVCGSLFREPIILPCSHNVCLPCARTIAVQTPDGE). Residues 55–70 (AAAAATPPDQDAAAGA) are compositionally biased toward low complexity. 2 disordered regions span residues 55–74 (AAAAATPPDQDAAAGATSGG) and 247–284 (QPPPPPTPPEATPAVTGTSTASSAGGCRSPGGAGASAP). The segment at 201–248 (AICQLCDRTPPEPAATLCEQCDVLYCATCQLKCHPSRGPFAKHRLVQP) adopts a B box-type 1; degenerate zinc-finger fold. Positions 247-257 (QPPPPPTPPEA) are enriched in pro residues. The B box-type 2 zinc-finger motif lies at 285-327 (RKFPTCPEHEMENYSMYCVSCRSPVCYMCLEEGRHSKHEVKPL). Zn(2+) is bound by residues Cys-290, His-293, Cys-313, and His-319. Residues 332–369 (KQHKAQLSQALNGVSDKAKEAKEFLVQLKNILQQIQEN) adopt a coiled-coil conformation. Residues 435 to 493 (IKEDDPSGFLQISDALIKRVQTSQEQWVKGALEPKVSAEFDLTLDSEPLLQAIHQLDFV) form the COS domain. A Fibronectin type-III domain is found at 498–592 (PPVPLLQLEK…KTVVLQTSDV (95 aa)). Residues 574–765 (NSSGVGPYSK…VPTNLGRPKL (192 aa)) enclose the B30.2/SPRY domain.

The protein resides in the cytoplasm. Its subcellular location is the cytoskeleton. In Mus musculus (Mouse), this protein is Tripartite motif-containing protein 67 (Trim67).